Consider the following 312-residue polypeptide: Large ribosomal subunit protein uL15m (312 aa).

Residues 63-89 (RIRKGRGPSSGYGKTAGRGTKGQKAHG) form a disordered region. The segment covering 70 to 82 (PSSGYGKTAGRGT) has biased composition (gly residues).

This sequence belongs to the universal ribosomal protein uL15 family. In terms of assembly, component of the mitochondrial large ribosomal subunit (mt-LSU). Mature N.crassa 74S mitochondrial ribosomes consist of a small (37S) and a large (54S) subunit. The 37S small subunit contains a 16S ribosomal RNA (16S mt-rRNA) and 32 different proteins. The 54S large subunit contains a 23S rRNA (23S mt-rRNA) and 42 different proteins.

It is found in the mitochondrion. Component of the mitochondrial ribosome (mitoribosome), a dedicated translation machinery responsible for the synthesis of mitochondrial genome-encoded proteins, including at least some of the essential transmembrane subunits of the mitochondrial respiratory chain. The mitoribosomes are attached to the mitochondrial inner membrane and translation products are cotranslationally integrated into the membrane. In Neurospora crassa (strain ATCC 24698 / 74-OR23-1A / CBS 708.71 / DSM 1257 / FGSC 987), this protein is Large ribosomal subunit protein uL15m (mrpl10).